The following is a 144-amino-acid chain: uncharacterized protein (144 aa).

Residues Ile13–Phe120 form the HIT domain. The Histidine triad motif signature appears at His105–His109.

This is an uncharacterized protein from Mycoplasma pneumoniae (strain ATCC 29342 / M129 / Subtype 1) (Mycoplasmoides pneumoniae).